Consider the following 349-residue polypeptide: Phenylalanine--tRNA ligase alpha subunit (349 aa).

Glutamate 264 provides a ligand contact to Mg(2+).

Belongs to the class-II aminoacyl-tRNA synthetase family. Phe-tRNA synthetase alpha subunit type 1 subfamily. In terms of assembly, tetramer of two alpha and two beta subunits. It depends on Mg(2+) as a cofactor.

The protein resides in the cytoplasm. The catalysed reaction is tRNA(Phe) + L-phenylalanine + ATP = L-phenylalanyl-tRNA(Phe) + AMP + diphosphate + H(+). This chain is Phenylalanine--tRNA ligase alpha subunit, found in Myxococcus xanthus (strain DK1622).